Reading from the N-terminus, the 466-residue chain is Siroheme synthase (466 aa).

The interval 1–203 (MNYLPIFIDI…GKIQEAKADL (203 aa)) is precorrin-2 dehydrogenase /sirohydrochlorin ferrochelatase. Residues 22–23 (SI) and 43–44 (KS) contribute to the NAD(+) site. S128 bears the Phosphoserine mark. A uroporphyrinogen-III C-methyltransferase region spans residues 216 to 466 (GAVYLVGGGP…FDAKPISSKK (251 aa)). Residue P225 coordinates S-adenosyl-L-methionine. Catalysis depends on D248, which acts as the Proton acceptor. The Proton donor role is filled by K270. S-adenosyl-L-methionine is bound by residues 301 to 303 (GGD), I306, 331 to 332 (TA), M383, and G412.

This sequence in the N-terminal section; belongs to the precorrin-2 dehydrogenase / sirohydrochlorin ferrochelatase family. In the C-terminal section; belongs to the precorrin methyltransferase family.

The catalysed reaction is uroporphyrinogen III + 2 S-adenosyl-L-methionine = precorrin-2 + 2 S-adenosyl-L-homocysteine + H(+). It carries out the reaction precorrin-2 + NAD(+) = sirohydrochlorin + NADH + 2 H(+). It catalyses the reaction siroheme + 2 H(+) = sirohydrochlorin + Fe(2+). It participates in cofactor biosynthesis; adenosylcobalamin biosynthesis; precorrin-2 from uroporphyrinogen III: step 1/1. Its pathway is cofactor biosynthesis; adenosylcobalamin biosynthesis; sirohydrochlorin from precorrin-2: step 1/1. It functions in the pathway porphyrin-containing compound metabolism; siroheme biosynthesis; precorrin-2 from uroporphyrinogen III: step 1/1. The protein operates within porphyrin-containing compound metabolism; siroheme biosynthesis; siroheme from sirohydrochlorin: step 1/1. It participates in porphyrin-containing compound metabolism; siroheme biosynthesis; sirohydrochlorin from precorrin-2: step 1/1. Functionally, multifunctional enzyme that catalyzes the SAM-dependent methylations of uroporphyrinogen III at position C-2 and C-7 to form precorrin-2 via precorrin-1. Then it catalyzes the NAD-dependent ring dehydrogenation of precorrin-2 to yield sirohydrochlorin. Finally, it catalyzes the ferrochelation of sirohydrochlorin to yield siroheme. The polypeptide is Siroheme synthase (Vesicomyosocius okutanii subsp. Calyptogena okutanii (strain HA)).